A 79-amino-acid chain; its full sequence is ATP synthase subunit c (79 aa).

The next 2 membrane-spanning stretches (helical) occupy residues 7–27 (VSGMAALGAGIAALACIGAGI) and 56–76 (IGSAFSEATAIYGLIIALFLI).

This sequence belongs to the ATPase C chain family. In terms of assembly, F-type ATPases have 2 components, F(1) - the catalytic core - and F(0) - the membrane proton channel. F(1) has five subunits: alpha(3), beta(3), gamma(1), delta(1), epsilon(1). F(0) has three main subunits: a(1), b(2) and c(10-14). The alpha and beta chains form an alternating ring which encloses part of the gamma chain. F(1) is attached to F(0) by a central stalk formed by the gamma and epsilon chains, while a peripheral stalk is formed by the delta and b chains.

The protein localises to the cell membrane. Functionally, f(1)F(0) ATP synthase produces ATP from ADP in the presence of a proton or sodium gradient. F-type ATPases consist of two structural domains, F(1) containing the extramembraneous catalytic core and F(0) containing the membrane proton channel, linked together by a central stalk and a peripheral stalk. During catalysis, ATP synthesis in the catalytic domain of F(1) is coupled via a rotary mechanism of the central stalk subunits to proton translocation. Key component of the F(0) channel; it plays a direct role in translocation across the membrane. A homomeric c-ring of between 10-14 subunits forms the central stalk rotor element with the F(1) delta and epsilon subunits. In Clostridium botulinum (strain Hall / ATCC 3502 / NCTC 13319 / Type A), this protein is ATP synthase subunit c.